Consider the following 160-residue polypeptide: Small ribosomal subunit protein uS17z (160 aa).

The protein belongs to the universal ribosomal protein uS17 family.

It is found in the cytoplasm. In Arabidopsis thaliana (Mouse-ear cress), this protein is Small ribosomal subunit protein uS17z (RPS11A).